The chain runs to 367 residues: Glutamate 5-kinase 2 (367 aa).

K10 contributes to the ATP binding site. Substrate-binding residues include S50, D136, and N148. ATP contacts are provided by residues 168–169 (TD) and 210–216 (TGGMATK). Residues 275-353 (SGQIVIDAGA…KQIGELLDYD (79 aa)) enclose the PUA domain.

This sequence belongs to the glutamate 5-kinase family.

The protein resides in the cytoplasm. The enzyme catalyses L-glutamate + ATP = L-glutamyl 5-phosphate + ADP. The protein operates within amino-acid biosynthesis; L-proline biosynthesis; L-glutamate 5-semialdehyde from L-glutamate: step 1/2. Catalyzes the transfer of a phosphate group to glutamate to form L-glutamate 5-phosphate. This Pseudoalteromonas translucida (strain TAC 125) protein is Glutamate 5-kinase 2.